A 120-amino-acid polypeptide reads, in one-letter code: Large ribosomal subunit protein bL17 (120 aa).

The protein belongs to the bacterial ribosomal protein bL17 family. As to quaternary structure, part of the 50S ribosomal subunit. Contacts protein L32.

The protein is Large ribosomal subunit protein bL17 of Anoxybacillus flavithermus (strain DSM 21510 / WK1).